The chain runs to 273 residues: 4-hydroxy-tetrahydrodipicolinate reductase (273 aa).

NAD(+) contacts are provided by residues 12–17 and Glu-38; that span reads GAGGRM. NADP(+) is bound at residue Arg-39. Residues 102–104 and 126–129 each bind NAD(+); these read GTT and AANF. His-159 functions as the Proton donor/acceptor in the catalytic mechanism. His-160 contributes to the (S)-2,3,4,5-tetrahydrodipicolinate binding site. Catalysis depends on Lys-163, which acts as the Proton donor. A (S)-2,3,4,5-tetrahydrodipicolinate-binding site is contributed by 169-170; the sequence is GT.

This sequence belongs to the DapB family. In terms of assembly, homotetramer.

It is found in the cytoplasm. The enzyme catalyses (S)-2,3,4,5-tetrahydrodipicolinate + NAD(+) + H2O = (2S,4S)-4-hydroxy-2,3,4,5-tetrahydrodipicolinate + NADH + H(+). The catalysed reaction is (S)-2,3,4,5-tetrahydrodipicolinate + NADP(+) + H2O = (2S,4S)-4-hydroxy-2,3,4,5-tetrahydrodipicolinate + NADPH + H(+). Its pathway is amino-acid biosynthesis; L-lysine biosynthesis via DAP pathway; (S)-tetrahydrodipicolinate from L-aspartate: step 4/4. Functionally, catalyzes the conversion of 4-hydroxy-tetrahydrodipicolinate (HTPA) to tetrahydrodipicolinate. This is 4-hydroxy-tetrahydrodipicolinate reductase from Salmonella schwarzengrund (strain CVM19633).